The following is an 83-amino-acid chain: uncharacterized protein (83 aa).

Residues 50–70 (IMVFLGEAWIILIPFAIFCII) form a helical membrane-spanning segment.

This sequence belongs to the plectrovirus ORF7 family.

It is found in the host membrane. This is an uncharacterized protein from Spiroplasma citri (SpV1).